The sequence spans 721 residues: Nitrogen permease regulator 3 (721 aa).

The first 21 residues, 1-21 (MSYNLPNPSLIGILLIISTHS), serve as a signal peptide directing secretion. Disordered stretches follow at residues 27–54 (YKQPPGLTKEPDEDEGEYDQEDIAETES) and 555–614 (DLEN…NINA). Residues 37-54 (PDEDEGEYDQEDIAETES) are compositionally biased toward acidic residues.

Belongs to the NPR3 family.

In terms of biological role, mediates inactivation of the TORC1 complex in response to amino acid starvation. Required for meiotic nuclear division. In Scheffersomyces stipitis (strain ATCC 58785 / CBS 6054 / NBRC 10063 / NRRL Y-11545) (Yeast), this protein is Nitrogen permease regulator 3 (NPR3).